Consider the following 221-residue polypeptide: UPF0319 protein CGSHiGG_02140 (221 aa).

A signal peptide spans 1-21 (MKLRAVVLGLATLCTSTATFA).

Belongs to the UPF0319 family.

This is UPF0319 protein CGSHiGG_02140 from Haemophilus influenzae (strain PittGG).